A 137-amino-acid polypeptide reads, in one-letter code: Large ribosomal subunit protein uL16 (137 aa).

The span at 1-17 (MLSPKRTKFRKQQRGRM) shows a compositional bias: basic residues. A disordered region spans residues 1 to 24 (MLSPKRTKFRKQQRGRMRGNANSG).

This sequence belongs to the universal ribosomal protein uL16 family. Part of the 50S ribosomal subunit.

Binds 23S rRNA and is also seen to make contacts with the A and possibly P site tRNAs. This is Large ribosomal subunit protein uL16 from Trichodesmium erythraeum (strain IMS101).